We begin with the raw amino-acid sequence, 411 residues long: MHKVLTELRDREILKDISNEEKFLSLPKNSGVYVGFDPTADSLHLGNYVQIVNLIRFKKHNWNALAVLGGATGMIGDPSFRSTERVLLSTEELLKNKNKIKSQLESFGLKVFDNYEIYKDISFLDFLKNIGKLINVSYMLAKDSVKDRLAQGLSFTEFSYQIIQGYDFLHLYQNQDIFVQYGGSDQWGNITTGIEMISKVVGDNHKAIAITANLLTDSNGNKFGKSTGGGNLWLDAQKTKPFDMYQFLINQPDSEVEKLLKWLTFLEISEIKDLVNKHNKNPKDRLAQKALAYEVIKDIHGKSAAENCTFLSEMLFNLSLDLSKVTLENMEFAYNQIESFEVEKGVNLVNFLVENKILQSKRLAREFIASKSLKFNYEPIDEDFSVSSNYFEGKYATLHLGKKKILICKVK.

Tyr-33 is an L-tyrosine binding site. The 'HIGH' region signature appears at Pro-38–Asn-47. Residues Tyr-160 and Gln-164 each coordinate L-tyrosine. Positions Lys-222–Ser-226 match the 'KMSKS' region motif. Lys-225 is an ATP binding site. The S4 RNA-binding domain occupies Val-346–Val-410.

This sequence belongs to the class-I aminoacyl-tRNA synthetase family. TyrS type 1 subfamily. Homodimer.

It is found in the cytoplasm. The catalysed reaction is tRNA(Tyr) + L-tyrosine + ATP = L-tyrosyl-tRNA(Tyr) + AMP + diphosphate + H(+). Catalyzes the attachment of tyrosine to tRNA(Tyr) in a two-step reaction: tyrosine is first activated by ATP to form Tyr-AMP and then transferred to the acceptor end of tRNA(Tyr). The sequence is that of Tyrosine--tRNA ligase from Mycoplasmopsis synoviae (strain 53) (Mycoplasma synoviae).